Reading from the N-terminus, the 234-residue chain is Glucosamine-6-phosphate deaminase (234 aa).

The active-site Proton acceptor; for enolization step is the aspartate 62. Asparagine 128 acts as the For ring-opening step in catalysis. Histidine 130 (proton acceptor; for ring-opening step) is an active-site residue. Residue glutamate 135 is the For ring-opening step of the active site.

It belongs to the glucosamine/galactosamine-6-phosphate isomerase family. NagB subfamily.

It catalyses the reaction alpha-D-glucosamine 6-phosphate + H2O = beta-D-fructose 6-phosphate + NH4(+). The protein operates within amino-sugar metabolism; N-acetylneuraminate degradation; D-fructose 6-phosphate from N-acetylneuraminate: step 5/5. In terms of biological role, catalyzes the reversible isomerization-deamination of glucosamine 6-phosphate (GlcN6P) to form fructose 6-phosphate (Fru6P) and ammonium ion. The sequence is that of Glucosamine-6-phosphate deaminase from Lactobacillus delbrueckii subsp. bulgaricus (strain ATCC 11842 / DSM 20081 / BCRC 10696 / JCM 1002 / NBRC 13953 / NCIMB 11778 / NCTC 12712 / WDCM 00102 / Lb 14).